Consider the following 211-residue polypeptide: Superoxide dismutase [Fe] (211 aa).

Fe cation-binding residues include His-31, His-79, Asp-165, and His-169.

The protein belongs to the iron/manganese superoxide dismutase family. Homotetramer. Fe cation is required as a cofactor.

The enzyme catalyses 2 superoxide + 2 H(+) = H2O2 + O2. Functionally, destroys superoxide anion radicals which are normally produced within the cells and which are toxic to biological systems. This chain is Superoxide dismutase [Fe] (sod), found in Pyrobaculum aerophilum (strain ATCC 51768 / DSM 7523 / JCM 9630 / CIP 104966 / NBRC 100827 / IM2).